Reading from the N-terminus, the 514-residue chain is Cardiolipin synthase 2 (514 aa).

The next 3 helical transmembrane spans lie at 7–27 (LIFF…FIDV), 41–61 (ILGI…CVIF), and 71–91 (LTWL…YLLF). 2 consecutive PLD phosphodiesterase domains span residues 249–276 (INYR…GDEY) and 427–454 (EKGF…DMRS). Residues His254, Lys256, Asp261, His432, Lys434, and Asp439 contribute to the active site.

Belongs to the phospholipase D family. Cardiolipin synthase subfamily.

The protein resides in the cell membrane. The catalysed reaction is 2 a 1,2-diacyl-sn-glycero-3-phospho-(1'-sn-glycerol) = a cardiolipin + glycerol. In terms of biological role, catalyzes the reversible phosphatidyl group transfer from one phosphatidylglycerol molecule to another to form cardiolipin (CL) (diphosphatidylglycerol) and glycerol. The polypeptide is Cardiolipin synthase 2 (cls2) (Bacillus cereus (strain ATCC 14579 / DSM 31 / CCUG 7414 / JCM 2152 / NBRC 15305 / NCIMB 9373 / NCTC 2599 / NRRL B-3711)).